Here is a 548-residue protein sequence, read N- to C-terminus: Chaperonin GroEL (548 aa).

Residues 30 to 33, Lys51, 87 to 91, Gly415, 479 to 481, and Asp495 each bind ATP; these read TLGP, DGTTT, and NAA.

Belongs to the chaperonin (HSP60) family. Forms a cylinder of 14 subunits composed of two heptameric rings stacked back-to-back. Interacts with the co-chaperonin GroES.

It is found in the cytoplasm. The enzyme catalyses ATP + H2O + a folded polypeptide = ADP + phosphate + an unfolded polypeptide.. Together with its co-chaperonin GroES, plays an essential role in assisting protein folding. The GroEL-GroES system forms a nano-cage that allows encapsulation of the non-native substrate proteins and provides a physical environment optimized to promote and accelerate protein folding. This Klebsiella pneumoniae (strain 342) protein is Chaperonin GroEL.